The chain runs to 711 residues: Hepatocyte growth factor-like protein (711 aa).

The N-terminal stretch at M1–G18 is a signal peptide. The 85-residue stretch at S21–D105 folds into the PAN domain. Disulfide bonds link C56–C78, C60–C66, C110–C186, C131–C169, C157–C181, C191–C268, C194–C324, C212–C251, C240–C263, C283–C361, C304–C343, C332–C355, C370–C448, C391–C431, C419–C443, C468–C588, C507–C523, C602–C667, C632–C646, and C657–C685. N72 carries an N-linked (GlcNAc...) asparagine glycan. 4 Kringle domains span residues C110–C186, C191–C268, C283–C361, and C370–C448. N296 is a glycosylation site (N-linked (GlcNAc...) asparagine). The Peptidase S1 domain maps to V484–R709. N-linked (GlcNAc...) asparagine glycosylation occurs at N615.

Belongs to the peptidase S1 family. Plasminogen subfamily. In terms of assembly, dimer of an alpha chain and a beta chain linked by a disulfide bond. Interacts (via beta chain) with MST1R (via SEMA domain). Post-translationally, cleaved after Arg-483, probably by HPN/Hepsin, to yield the active form consisting of two disulfide-linked chains.

It is found in the secreted. This Homo sapiens (Human) protein is Hepatocyte growth factor-like protein (MST1).